The sequence spans 257 residues: Acetylglutamate kinase (257 aa).

Residues 43–44 (GG), Arg-65, and Asn-157 contribute to the substrate site. ATP-binding positions include 180 to 185 (DVSGIL) and 208 to 210 (IIT).

It belongs to the acetylglutamate kinase family. ArgB subfamily. As to quaternary structure, homodimer.

It is found in the cytoplasm. The enzyme catalyses N-acetyl-L-glutamate + ATP = N-acetyl-L-glutamyl 5-phosphate + ADP. It participates in amino-acid biosynthesis; L-arginine biosynthesis; N(2)-acetyl-L-ornithine from L-glutamate: step 2/4. Functionally, catalyzes the ATP-dependent phosphorylation of N-acetyl-L-glutamate. This Proteus mirabilis (strain HI4320) protein is Acetylglutamate kinase.